A 408-amino-acid polypeptide reads, in one-letter code: Multidrug resistance protein MdtG (408 aa).

The next 11 helical transmembrane spans lie at 16–36 (LIVAWLGCFLTGAAFSLVMPF), 58–78 (IVFSITFLFSAIASPFWGGLA), 92–112 (LGMGIVMILMGMAQNIWQFLI), 115–135 (ALLGLLGGFVPNANALIATQV), 146–166 (TLSTGGVSGALLGPLAGGLLA), 173–193 (PVFFITASVLMLCFVVTLLCI), 224–244 (LFVTTMIIQIASGSIAPILTL), 253–273 (VGNIAFISGMIASVPGVAALL), 290–310 (ILIAALIFSVLLLIPMSFVQT), 319–339 (FLLGAADGALLPAVQTLLVYN), and 378–398 (AVFLVTACVVLFNIIYSWNSL).

Belongs to the major facilitator superfamily. DHA1 family. MdtG (TC 2.A.1.2.20) subfamily.

The protein resides in the cell inner membrane. Confers resistance to fosfomycin and deoxycholate. The polypeptide is Multidrug resistance protein MdtG (Escherichia fergusonii (strain ATCC 35469 / DSM 13698 / CCUG 18766 / IAM 14443 / JCM 21226 / LMG 7866 / NBRC 102419 / NCTC 12128 / CDC 0568-73)).